The following is a 513-amino-acid chain: Probable mannosyl-oligosaccharide alpha-1,2-mannosidase 1B (513 aa).

An N-terminal signal peptide occupies residues 1–21; that stretch reads MHLSSLSLSLTALAIVSPSAA. 7 N-linked (GlcNAc...) asparagine glycosylation sites follow: Asn-97, Asn-117, Asn-184, Asn-251, Asn-322, Asn-348, and Asn-368. Residues Cys-334 and Cys-363 are joined by a disulfide bond. The Proton donor role is filled by Glu-377. Position 503 (Thr-503) interacts with Ca(2+).

Belongs to the glycosyl hydrolase 47 family. Monomer. Ca(2+) serves as cofactor. The cofactor is Mg(2+).

It localises to the cytoplasmic vesicle lumen. The catalysed reaction is N(4)-(alpha-D-Man-(1-&gt;2)-alpha-D-Man-(1-&gt;2)-alpha-D-Man-(1-&gt;3)-[alpha-D-Man-(1-&gt;2)-alpha-D-Man-(1-&gt;3)-[alpha-D-Man-(1-&gt;2)-alpha-D-Man-(1-&gt;6)]-alpha-D-Man-(1-&gt;6)]-beta-D-Man-(1-&gt;4)-beta-D-GlcNAc-(1-&gt;4)-beta-D-GlcNAc)-L-asparaginyl-[protein] (N-glucan mannose isomer 9A1,2,3B1,2,3) + 4 H2O = N(4)-(alpha-D-Man-(1-&gt;3)-[alpha-D-Man-(1-&gt;3)-[alpha-D-Man-(1-&gt;6)]-alpha-D-Man-(1-&gt;6)]-beta-D-Man-(1-&gt;4)-beta-D-GlcNAc-(1-&gt;4)-beta-D-GlcNAc)-L-asparaginyl-[protein] (N-glucan mannose isomer 5A1,2) + 4 beta-D-mannose. It catalyses the reaction N(4)-(alpha-D-Man-(1-&gt;2)-alpha-D-Man-(1-&gt;2)-alpha-D-Man-(1-&gt;3)-[alpha-D-Man-(1-&gt;3)-[alpha-D-Man-(1-&gt;2)-alpha-D-Man-(1-&gt;6)]-alpha-D-Man-(1-&gt;6)]-beta-D-Man-(1-&gt;4)-beta-D-GlcNAc-(1-&gt;4)-beta-D-GlcNAc)-L-asparaginyl-[protein] (N-glucan mannose isomer 8A1,2,3B1,3) + 3 H2O = N(4)-(alpha-D-Man-(1-&gt;3)-[alpha-D-Man-(1-&gt;3)-[alpha-D-Man-(1-&gt;6)]-alpha-D-Man-(1-&gt;6)]-beta-D-Man-(1-&gt;4)-beta-D-GlcNAc-(1-&gt;4)-beta-D-GlcNAc)-L-asparaginyl-[protein] (N-glucan mannose isomer 5A1,2) + 3 beta-D-mannose. Its pathway is protein modification; protein glycosylation. Involved in the maturation of Asn-linked oligosaccharides. Progressively trims alpha-1,2-linked mannose residues from Man(9)GlcNAc(2) to produce Man(5)GlcNAc(2). This chain is Probable mannosyl-oligosaccharide alpha-1,2-mannosidase 1B (mns1B), found in Aspergillus niger (strain ATCC MYA-4892 / CBS 513.88 / FGSC A1513).